We begin with the raw amino-acid sequence, 1133 residues long: RNA-dependent RNA polymerase 2 (1133 aa).

The Mg(2+) site is built by Asp830, Asp832, and Asp834.

It belongs to the RdRP family. As to quaternary structure, interacts with NRPD1 and SHH1. Associates with Pol IV complex, forming an interpolymerase channel bridging their active sites, through which the Pol IV-generated transcript is handed over to the RDR2 active site after being backtracked, where it is used as the template for double-stranded RNA (dsRNA) synthesis. Interacts with JMJ24.

It localises to the nucleus. It is found in the nucleoplasm. The protein localises to the nucleolus. The enzyme catalyses RNA(n) + a ribonucleoside 5'-triphosphate = RNA(n+1) + diphosphate. Functionally, RNA-dependent direct polymerase involved in the production of small interfering RNAs (siRNAs). Binds to single-stranded RNA (ssRNA); engages ssRNAs longer than 7 nucleotides and initiates internal to their 3' ends. Able to transcribe the RNA of an RNA/DNA hybrid, the transcript produced by Pol IV, if its 3' end is accessible, to generate double-stranded small interfering RNAs (dsRNAs) precursor essential for establishing and maintaining DNA methylation. Required for the biogenesis of endogenous siRNAs of 24 nucleotide which derive from heterochromatin and DNA repeats such as transposons or endogenous gene tandem repeats, such as repeats present in FWA gene. Involved in transcriptional gene silencing (TGS). Component of the RNA-directed DNA methylation (RdDM) silencing pathway that utilizes siRNAs to guide DNA methyltransferases to asymmetric cytosines. Involved in control of flowering time through RdDM of FWA locus. Required for reception of long-distance mRNA silencing in the shoot. Required for the formation of telomeric siRNAs and the RNA-dependent DNA methylation of asymmetric cytosines in telomeric (5'-CCCTAAA-3') repeats. The sequence is that of RNA-dependent RNA polymerase 2 from Arabidopsis thaliana (Mouse-ear cress).